The following is a 316-amino-acid chain: Pantothenate kinase (316 aa).

95-102 (GSVAVGKS) provides a ligand contact to ATP.

The protein belongs to the prokaryotic pantothenate kinase family.

It localises to the cytoplasm. It catalyses the reaction (R)-pantothenate + ATP = (R)-4'-phosphopantothenate + ADP + H(+). It functions in the pathway cofactor biosynthesis; coenzyme A biosynthesis; CoA from (R)-pantothenate: step 1/5. In Sodalis glossinidius (strain morsitans), this protein is Pantothenate kinase.